The sequence spans 452 residues: Tubulin beta-2 chain (452 aa).

GTP contacts are provided by Gln-11, Glu-74, Ser-143, Val-147, Thr-148, Gly-149, Asn-209, and Asn-231. Residue Glu-74 coordinates Mg(2+). A disordered region spans residues 431-452 (QEATADDEAEFEEEGEVEGEYD). Acidic residues predominate over residues 434-452 (TADDEAEFEEEGEVEGEYD).

The protein belongs to the tubulin family. Dimer of alpha and beta chains. A typical microtubule is a hollow water-filled tube with an outer diameter of 25 nm and an inner diameter of 15 nM. Alpha-beta heterodimers associate head-to-tail to form protofilaments running lengthwise along the microtubule wall with the beta-tubulin subunit facing the microtubule plus end conferring a structural polarity. Microtubules usually have 13 protofilaments but different protofilament numbers can be found in some organisms and specialized cells. The cofactor is Mg(2+).

It localises to the cytoplasm. The protein localises to the cytoskeleton. Tubulin is the major constituent of microtubules, a cylinder consisting of laterally associated linear protofilaments composed of alpha- and beta-tubulin heterodimers. Microtubules grow by the addition of GTP-tubulin dimers to the microtubule end, where a stabilizing cap forms. Below the cap, tubulin dimers are in GDP-bound state, owing to GTPase activity of alpha-tubulin. The polypeptide is Tubulin beta-2 chain (Homarus americanus (American lobster)).